The sequence spans 274 residues: tRNA pseudouridine synthase A (274 aa).

D60 (nucleophile) is an active-site residue. Residue Y118 coordinates substrate.

The protein belongs to the tRNA pseudouridine synthase TruA family. In terms of assembly, homodimer.

The enzyme catalyses uridine(38/39/40) in tRNA = pseudouridine(38/39/40) in tRNA. Its function is as follows. Formation of pseudouridine at positions 38, 39 and 40 in the anticodon stem and loop of transfer RNAs. The chain is tRNA pseudouridine synthase A from Picosynechococcus sp. (strain ATCC 27264 / PCC 7002 / PR-6) (Agmenellum quadruplicatum).